A 104-amino-acid chain; its full sequence is Biogenesis of lysosome-related organelles complex 1 subunit BLS1 (104 aa).

It belongs to the BLOC1S1 family. As to quaternary structure, component of the biogenesis of lysosome-related organelles complex-1 (BLOC-1).

The protein resides in the endosome. Component of the biogenesis of lysosome-related organelles complex-1 (BLOC-1), a complex involved in endosomal cargo sorting. In Kluyveromyces lactis (strain ATCC 8585 / CBS 2359 / DSM 70799 / NBRC 1267 / NRRL Y-1140 / WM37) (Yeast), this protein is Biogenesis of lysosome-related organelles complex 1 subunit BLS1 (BLS1).